We begin with the raw amino-acid sequence, 504 residues long: Probable periplasmic serine endoprotease DegP-like (504 aa).

An N-terminal signal peptide occupies residues 1-26 (MLKTTTVAGLAAVLLTTGLPAEVAQS). Residues 102–118 (RADRWRDRRGPRGEGRL) show a composition bias toward basic and acidic residues. The disordered stretch occupies residues 102–122 (RADRWRDRRGPRGEGRLRPRA). The tract at residues 113-286 (RGEGRLRPRA…PASVAKDVVD (174 aa)) is serine protease. Residues His140, Asp170, and Ser244 each act as charge relay system in the active site. Substrate contacts are provided by residues 242–244 (GNS) and 299–303 (LGVQI). PDZ domains lie at 287-378 (SLIK…LWRS) and 401-491 (ATGE…IEAQ). Disordered stretches follow at residues 389 to 411 (GTLP…DEGQ) and 428 to 447 (EDGK…AGDR).

This sequence belongs to the peptidase S1C family.

The protein localises to the periplasm. The catalysed reaction is Acts on substrates that are at least partially unfolded. The cleavage site P1 residue is normally between a pair of hydrophobic residues, such as Val-|-Val.. Its function is as follows. Might be efficient in the degradation of transiently denatured and unfolded proteins which accumulate in the periplasm following stress conditions. The sequence is that of Probable periplasmic serine endoprotease DegP-like (degP1) from Rhizobium meliloti (strain 1021) (Ensifer meliloti).